The following is a 381-amino-acid chain: Cytochrome b (381 aa).

The next 4 membrane-spanning stretches (helical) occupy residues 38-58 (FGSL…FLAM), 82-103 (WLLR…YFHI), 118-138 (WMTG…GYVL), and 183-203 (FFTF…IHLL). Heme b is bound by residues His88 and His102. Heme b contacts are provided by His187 and His201. His206 is an a ubiquinone binding site. A run of 4 helical transmembrane segments spans residues 231 to 251 (IKDT…SLTS), 293 to 313 (LGGV…PFTF), 325 to 345 (VAQP…WIGA), and 352 to 372 (YNFL…FTPI).

It belongs to the cytochrome b family. The main subunits of complex b-c1 are: cytochrome b, cytochrome c1 and the Rieske protein. Requires heme b as cofactor.

The protein localises to the mitochondrion inner membrane. Component of the ubiquinol-cytochrome c reductase complex (complex III or cytochrome b-c1 complex) that is part of the mitochondrial respiratory chain. The b-c1 complex mediates electron transfer from ubiquinol to cytochrome c. Contributes to the generation of a proton gradient across the mitochondrial membrane that is then used for ATP synthesis. In Artemia franciscana (Brine shrimp), this protein is Cytochrome b (MT-CYB).